The following is a 480-amino-acid chain: Cysteine--tRNA ligase (480 aa).

Position 31 (Cys31) interacts with Zn(2+). The short motif at 33–43 (PTVYDSSHIGH) is the 'HIGH' region element. Residues Cys211, His236, and Glu240 each coordinate Zn(2+). The 'KMSKS' region signature appears at 269-273 (KMSKS). Lys272 provides a ligand contact to ATP.

Belongs to the class-I aminoacyl-tRNA synthetase family. It depends on Zn(2+) as a cofactor.

It catalyses the reaction tRNA(Cys) + L-cysteine + ATP = L-cysteinyl-tRNA(Cys) + AMP + diphosphate. This is Cysteine--tRNA ligase from Encephalitozoon cuniculi (strain GB-M1) (Microsporidian parasite).